Consider the following 626-residue polypeptide: Janus kinase and microtubule-interacting protein 1 (626 aa).

A disordered region spans residues 1 to 25 (MSKKGRSKGEKPETETDSVQMANEE). Positions 1-365 (MSKKGRSKGE…KLKSLTRENV (365 aa)) are mediates association with microtubules. Coiled coils occupy residues 13-255 (ETET…EAER) and 284-413 (ERDV…DDLS). Residues 365 to 626 (VEMKEKLSAQ…ILFEPKLKFV (262 aa)) form a mediates interaction with TYK2 and GABBR1 region. A Phosphoserine modification is found at Ser-382. Residues 452–461 (ETLSETSYNT) are compositionally biased toward polar residues. The interval 452–481 (ETLSETSYNTDRTDRTPATPEEDLDETTTR) is disordered. Thr-470 carries the phosphothreonine modification. The stretch at 490–604 (QLTREYQALQ…EFRVLELEVR (115 aa)) forms a coiled coil.

Belongs to the JAKMIP family. Homodimer. Interacts with JAK1 and TYK2. Forms a complex with GABBR1 and KIF5B/kinesin-1. In terms of processing, phosphorylated. As to expression, specifically expressed in brain and testis by spermatogonia, spermatocytes, spermatozoa and Sertoli cells (at protein level).

Its subcellular location is the cytoplasm. It is found in the cytoskeleton. It localises to the membrane. In terms of biological role, associates with microtubules and may play a role in the microtubule-dependent transport of the GABA-B receptor. May play a role in JAK1 signaling and regulate microtubule cytoskeleton rearrangements. This is Janus kinase and microtubule-interacting protein 1 (Jakmip1) from Rattus norvegicus (Rat).